A 359-amino-acid chain; its full sequence is tRNA-specific 2-thiouridylase MnmA (359 aa).

Residues 9–16 (GLSGGVDS) and Met35 contribute to the ATP site. The interval 95–97 (NPD) is interaction with target base in tRNA. The active-site Nucleophile is the Cys100. The cysteines at positions 100 and 197 are disulfide-linked. Residue Gly124 participates in ATP binding. Positions 147–149 (KDQ) are interaction with tRNA. Cys197 acts as the Cysteine persulfide intermediate in catalysis. Residues 309-310 (RY) form an interaction with tRNA region.

This sequence belongs to the MnmA/TRMU family.

The protein resides in the cytoplasm. It carries out the reaction S-sulfanyl-L-cysteinyl-[protein] + uridine(34) in tRNA + AH2 + ATP = 2-thiouridine(34) in tRNA + L-cysteinyl-[protein] + A + AMP + diphosphate + H(+). In terms of biological role, catalyzes the 2-thiolation of uridine at the wobble position (U34) of tRNA, leading to the formation of s(2)U34. The chain is tRNA-specific 2-thiouridylase MnmA from Cupriavidus metallidurans (strain ATCC 43123 / DSM 2839 / NBRC 102507 / CH34) (Ralstonia metallidurans).